A 116-amino-acid polypeptide reads, in one-letter code: UPF0482 protein PC1_2049 (116 aa).

An N-terminal signal peptide occupies residues 1–31 (MNHYSFSSLIRAFIPLSLVIVSAAWQPAALA).

This sequence belongs to the UPF0482 family.

This chain is UPF0482 protein PC1_2049, found in Pectobacterium carotovorum subsp. carotovorum (strain PC1).